Reading from the N-terminus, the 498-residue chain is MNSKKTGVIILGCIAFLHIACSGDKKTQAQDTSDSMLEKSSAISEKPNIIFYLADDQDVYDYGCYGNEKVHTPAVDALAKDGILFTNAFTAQAICAPSRSQLFTGKYPLKNGCFANHTGTRSDIKSVTTHMKKLGYEVVLAGKSHVKPENVYQWDREWEPVPKQGVPRDYIPLDSIAAYLKNAKKPFCMFITSKYPHGKYFDVEHPKASDIKFYPFNENKKTDKTFIKTKAGYYRSIEEDNTQLEEVLKLVDTYLTDNTLFIYSADHGVSGKFTVKDIGLKVPFVARWPKVIKPGSTSNQLIHYTDVLPTFMEIAGGKFPEDMDGNSFLPLLQGKDVEVNNYVYGVRTNQNILNSEIFPSRMIRDKRYKYIRNFNSIEVVEQNLTGKPNVNYFIERGAKAHKNEPFEELYDLQNDPFEQHNLASNPDYKSIKEKLIKDMFSWMKAQGDILSENMIGIPIITPKGNRGFKLDQDTPRRKIPEARKNTLTKDDYIVIEHW.

A signal peptide spans 1-22 (MNSKKTGVIILGCIAFLHIACS). The Ca(2+) site is built by D55, D56, C95, D266, and H267. The active-site Nucleophile is C95. A 3-oxoalanine (Cys) modification is found at C95.

The protein belongs to the sulfatase family. Ca(2+) is required as a cofactor. In terms of processing, the conversion to 3-oxoalanine (also known as C-formylglycine, FGly), of a serine or cysteine residue in prokaryotes and of a cysteine residue in eukaryotes, is critical for catalytic activity. This post-translational modification is severely defective in multiple sulfatase deficiency (MSD).

It is found in the periplasm. Functionally, sulfatase involved in ulvan degradation. Ulvan is the main polysaccharide component of the Ulvales (green seaweed) cell wall. It is composed of disaccharide building blocks comprising 3-sulfated rhamnose (Rha3S) linked to D-glucuronic acid (GlcA), L-iduronic acid (IduA), or D-xylose (Xyl). This chain is Ulvan-active sulfatase, found in Formosa agariphila (strain DSM 15362 / KCTC 12365 / LMG 23005 / KMM 3901 / M-2Alg 35-1).